An 88-amino-acid polypeptide reads, in one-letter code: MALKERLGTVVSDKMDKTVVVAVVNRFPHSIYQKTVSRTTRYKAHDEENNCKVGDRVRITETRPLSATKRWSVAEVLRTTKQEKEAVK.

Belongs to the universal ribosomal protein uS17 family. In terms of assembly, part of the 30S ribosomal subunit.

Functionally, one of the primary rRNA binding proteins, it binds specifically to the 5'-end of 16S ribosomal RNA. The chain is Small ribosomal subunit protein uS17 from Prochlorococcus marinus (strain SARG / CCMP1375 / SS120).